Here is a 369-residue protein sequence, read N- to C-terminus: Glutamate 5-kinase (369 aa).

Residue Lys-9 coordinates ATP. Substrate-binding residues include Ser-49, Asp-136, and Asn-148. Residues 168–169 and 210–216 contribute to the ATP site; these read TD and TGGMLTK. The PUA domain occupies 275–355; the sequence is QGSIWVDKGA…KGVLIYRDDW (81 aa).

The protein belongs to the glutamate 5-kinase family.

The protein resides in the cytoplasm. The enzyme catalyses L-glutamate + ATP = L-glutamyl 5-phosphate + ADP. Its pathway is amino-acid biosynthesis; L-proline biosynthesis; L-glutamate 5-semialdehyde from L-glutamate: step 1/2. Catalyzes the transfer of a phosphate group to glutamate to form L-glutamate 5-phosphate. This Streptococcus pneumoniae (strain Hungary19A-6) protein is Glutamate 5-kinase.